We begin with the raw amino-acid sequence, 335 residues long: Aspartate carbamoyltransferase catalytic subunit (335 aa).

The carbamoyl phosphate site is built by R81 and T82. K109 is a binding site for L-aspartate. The carbamoyl phosphate site is built by R131, H159, and Q162. Residues R192 and R246 each coordinate L-aspartate. G287 and P288 together coordinate carbamoyl phosphate.

Belongs to the aspartate/ornithine carbamoyltransferase superfamily. ATCase family. Heterododecamer (2C3:3R2) of six catalytic PyrB chains organized as two trimers (C3), and six regulatory PyrI chains organized as three dimers (R2).

It carries out the reaction carbamoyl phosphate + L-aspartate = N-carbamoyl-L-aspartate + phosphate + H(+). It functions in the pathway pyrimidine metabolism; UMP biosynthesis via de novo pathway; (S)-dihydroorotate from bicarbonate: step 2/3. Catalyzes the condensation of carbamoyl phosphate and aspartate to form carbamoyl aspartate and inorganic phosphate, the committed step in the de novo pyrimidine nucleotide biosynthesis pathway. The sequence is that of Aspartate carbamoyltransferase catalytic subunit from Caulobacter sp. (strain K31).